The chain runs to 249 residues: Ciliogenesis and planar polarity effector 2 (249 aa).

The segment at 46–249 (PADVAAYKVF…VIAGLVGGAE (204 aa)) is small GTPase-like. GTP contacts are provided by residues 58–65 (GKSGVGKT) and 171–174 (TKLD).

This sequence belongs to the small GTPase superfamily. Rab family. In terms of assembly, interacts with fuz.

It is found in the cytoplasm. The protein localises to the cytoskeleton. It localises to the cilium basal body. Potential effector of the planar cell polarity signaling pathway. Plays a role in targeted membrane trafficking most probably at the level of vesicle fusion with membranes. Involved in cilium biogenesis by regulating the transport of cargo proteins to the basal body and to the apical tips of cilia. More generally involved in exocytosis in secretory cells. The chain is Ciliogenesis and planar polarity effector 2 from Xenopus laevis (African clawed frog).